Consider the following 625-residue polypeptide: Glucose dehydrogenase [FAD, quinone] (625 aa).

The N-terminal stretch at 1-42 is a signal peptide; the sequence is MSASASACDCLVGVPTGPTLASTCGGSAFMLFMGLLEVFIRS. 66 to 95 lines the FAD pocket; it reads DFIVIGGGSAGSVVASRLSEVPQWKVLLIE. Residue His-544 is the Proton acceptor of the active site. A non-standard amino acid (selenocysteine) is located at residue Sec-613.

This sequence belongs to the GMC oxidoreductase family. The cofactor is FAD.

The protein resides in the secreted. The catalysed reaction is a quinone + D-glucose = D-glucono-1,5-lactone + a quinol. In terms of biological role, essential for cuticular modification during development. The chain is Glucose dehydrogenase [FAD, quinone] (Gld) from Drosophila melanogaster (Fruit fly).